A 289-amino-acid polypeptide reads, in one-letter code: ATP synthase subunit gamma, mitochondrial (289 aa).

Belongs to the ATPase gamma chain family. In terms of assembly, F-type ATPases have 2 components, CF(1) - the catalytic core - and CF(0) - the membrane proton channel. CF(1) has five subunits: alpha(3), beta(3), gamma(1), delta(1), epsilon(1). CF(0) has three main subunits: a, b and c.

It is found in the mitochondrion. The protein resides in the mitochondrion inner membrane. In terms of biological role, mitochondrial membrane ATP synthase (F(1)F(0) ATP synthase or Complex V) produces ATP from ADP in the presence of a proton gradient across the membrane which is generated by electron transport complexes of the respiratory chain. F-type ATPases consist of two structural domains, F(1) - containing the extramembraneous catalytic core, and F(0) - containing the membrane proton channel, linked together by a central stalk and a peripheral stalk. During catalysis, ATP synthesis in the catalytic domain of F(1) is coupled via a rotary mechanism of the central stalk subunits to proton translocation. Part of the complex F(1) domain and the central stalk which is part of the complex rotary element. The gamma subunit protrudes into the catalytic domain formed of alpha(3)beta(3). Rotation of the central stalk against the surrounding alpha(3)beta(3) subunits leads to hydrolysis of ATP in three separate catalytic sites on the beta subunits. The polypeptide is ATP synthase subunit gamma, mitochondrial (ATP3) (Kluyveromyces lactis (strain ATCC 8585 / CBS 2359 / DSM 70799 / NBRC 1267 / NRRL Y-1140 / WM37) (Yeast)).